Reading from the N-terminus, the 264-residue chain is NAD-capped RNA hydrolase NudC (264 aa).

R70 contributes to the substrate binding site. Residues C99 and C102 each coordinate Zn(2+). Substrate is bound at residue E112. Zn(2+)-binding residues include C117 and C122. Y127 contacts substrate. One can recognise a Nudix hydrolase domain in the interval 128–252; it reads PVICPCIIVA…TIALKLIEHT (125 aa). Residues A161, E177, and E181 each contribute to the a divalent metal cation site. Residues 162 to 183 carry the Nudix box motif; the sequence is GFVEVGETFEQAVHREVLEETG. 195 to 202 is a substrate binding site; it reads QPWAFPNS. Residue E222 participates in a divalent metal cation binding. A245 contributes to the substrate binding site.

It belongs to the Nudix hydrolase family. NudC subfamily. As to quaternary structure, homodimer. It depends on Mg(2+) as a cofactor. Mn(2+) is required as a cofactor. Zn(2+) serves as cofactor.

It catalyses the reaction a 5'-end NAD(+)-phospho-ribonucleoside in mRNA + H2O = a 5'-end phospho-adenosine-phospho-ribonucleoside in mRNA + beta-nicotinamide D-ribonucleotide + 2 H(+). The enzyme catalyses NAD(+) + H2O = beta-nicotinamide D-ribonucleotide + AMP + 2 H(+). The catalysed reaction is NADH + H2O = reduced beta-nicotinamide D-ribonucleotide + AMP + 2 H(+). MRNA decapping enzyme that specifically removes the nicotinamide adenine dinucleotide (NAD) cap from a subset of mRNAs by hydrolyzing the diphosphate linkage to produce nicotinamide mononucleotide (NMN) and 5' monophosphate mRNA. The NAD-cap is present at the 5'-end of some mRNAs and stabilizes RNA against 5'-processing. Has preference for mRNAs with a 5'-end purine. Catalyzes the hydrolysis of a broad range of dinucleotide pyrophosphates. In Pasteurella multocida (strain Pm70), this protein is NAD-capped RNA hydrolase NudC.